The chain runs to 273 residues: uncharacterized protein (273 aa).

It belongs to the AtsA family.

This is an uncharacterized protein from Mycobacterium tuberculosis (strain CDC 1551 / Oshkosh).